The chain runs to 385 residues: 8-amino-7-oxononanoate synthase (385 aa).

Arg21 contacts substrate. 108 to 109 (GF) is a pyridoxal 5'-phosphate binding site. Position 133 (His133) interacts with substrate. Residues Ser179, His207, and Thr233 each contribute to the pyridoxal 5'-phosphate site. Lys236 carries the post-translational modification N6-(pyridoxal phosphate)lysine. Thr352 serves as a coordination point for substrate.

The protein belongs to the class-II pyridoxal-phosphate-dependent aminotransferase family. BioF subfamily. Homodimer. The cofactor is pyridoxal 5'-phosphate.

The enzyme catalyses 6-carboxyhexanoyl-[ACP] + L-alanine + H(+) = (8S)-8-amino-7-oxononanoate + holo-[ACP] + CO2. It participates in cofactor biosynthesis; biotin biosynthesis. Functionally, catalyzes the decarboxylative condensation of pimeloyl-[acyl-carrier protein] and L-alanine to produce 8-amino-7-oxononanoate (AON), [acyl-carrier protein], and carbon dioxide. The polypeptide is 8-amino-7-oxononanoate synthase (Salmonella arizonae (strain ATCC BAA-731 / CDC346-86 / RSK2980)).